The primary structure comprises 394 residues: ATP phosphoribosyltransferase regulatory subunit (394 aa).

Belongs to the class-II aminoacyl-tRNA synthetase family. HisZ subfamily. Heteromultimer composed of HisG and HisZ subunits.

The protein resides in the cytoplasm. The protein operates within amino-acid biosynthesis; L-histidine biosynthesis; L-histidine from 5-phospho-alpha-D-ribose 1-diphosphate: step 1/9. Functionally, required for the first step of histidine biosynthesis. May allow the feedback regulation of ATP phosphoribosyltransferase activity by histidine. The protein is ATP phosphoribosyltransferase regulatory subunit of Geobacillus thermodenitrificans (strain NG80-2).